The chain runs to 576 residues: Enolase 4 (576 aa).

A disordered region spans residues 187–232; sequence ELRNEAMSEAPPQATPTSAPAKDKKGNDKGKKGNITENPLPPAEPP. Over residues 196 to 206 the composition is skewed to low complexity; sequence APPQATPTSAP. Basic and acidic residues predominate over residues 207–217; it reads AKDKKGNDKGK. 2 residues coordinate substrate: E302 and K524.

It belongs to the enolase family.

It catalyses the reaction (2R)-2-phosphoglycerate = phosphoenolpyruvate + H2O. Its pathway is carbohydrate degradation; glycolysis; pyruvate from D-glyceraldehyde 3-phosphate: step 4/5. This chain is Enolase 4 (eno4), found in Danio rerio (Zebrafish).